The following is a 337-amino-acid chain: U11/U12 small nuclear ribonucleoprotein 48 kDa protein (337 aa).

The CHHC U11-48K-type zinc-finger motif lies at 55–82 (IAICPYDSNHRMPKSSLTKHMESCRLRK). Zn(2+) is bound by residues Cys58, His64, His74, and Cys78. Residues Lys87 and Lys104 each participate in a glycyl lysine isopeptide (Lys-Gly) (interchain with G-Cter in SUMO2) cross-link. Positions 255–276 (HWQEEQGRAGDAAEKNEERRSA) are enriched in basic and acidic residues. The disordered stretch occupies residues 255-337 (HWQEEQGRAG…HSHKRRKQKI (83 aa)). Basic residues predominate over residues 294-310 (RHRRARSRSPHKRKRNK). The segment covering 311–326 (DKSSESRRRKERDGER) has biased composition (basic and acidic residues). A compositionally biased stretch (basic residues) spans 327-337 (HHSHKRRKQKI).

In terms of assembly, component of the U11/U12 snRNPs that are part of the U12-type spliceosome. Not found in the major spliceosome.

It is found in the nucleus. In terms of biological role, likely involved in U12-type 5' splice site recognition. This chain is U11/U12 small nuclear ribonucleoprotein 48 kDa protein (Snrnp48), found in Mus musculus (Mouse).